We begin with the raw amino-acid sequence, 616 residues long: Chaperone protein HscA (616 aa).

Belongs to the heat shock protein 70 family.

In terms of biological role, chaperone involved in the maturation of iron-sulfur cluster-containing proteins. Has a low intrinsic ATPase activity which is markedly stimulated by HscB. Involved in the maturation of IscU. The polypeptide is Chaperone protein HscA (Shigella boydii serotype 18 (strain CDC 3083-94 / BS512)).